We begin with the raw amino-acid sequence, 345 residues long: UDP-N-acetylenolpyruvoylglucosamine reductase (345 aa).

Residues 27-197 (FDASAELAYE…TKVVFKLPKQ (171 aa)) enclose the FAD-binding PCMH-type domain. The active site involves arginine 174. Serine 245 serves as the catalytic Proton donor. The active site involves glutamate 341.

Belongs to the MurB family. FAD serves as cofactor.

The protein localises to the cytoplasm. It catalyses the reaction UDP-N-acetyl-alpha-D-muramate + NADP(+) = UDP-N-acetyl-3-O-(1-carboxyvinyl)-alpha-D-glucosamine + NADPH + H(+). It functions in the pathway cell wall biogenesis; peptidoglycan biosynthesis. Functionally, cell wall formation. This is UDP-N-acetylenolpyruvoylglucosamine reductase from Polynucleobacter asymbioticus (strain DSM 18221 / CIP 109841 / QLW-P1DMWA-1) (Polynucleobacter necessarius subsp. asymbioticus).